Here is a 527-residue protein sequence, read N- to C-terminus: Transcription factor bHLH157 (527 aa).

Disordered stretches follow at residues 295-318 (SGVNQSKRRKLDTSSAHSSSLFPQ) and 335-368 (SSIGGNWKKPHEEGVKKKRAKAGESRRPRPKDRQ). A compositionally biased stretch (polar residues) spans 307 to 318 (TSSAHSSSLFPQ). The Nuclear localization signal signature appears at 341 to 348 (WKKPHEEG). Residues 343 to 368 (KPHEEGVKKKRAKAGESRRPRPKDRQ) are compositionally biased toward basic and acidic residues. The bHLH domain maps to 354–403 (AKAGESRRPRPKDRQMIQDRIKELRGMIPNGAKCSIDTLLDLTIKHMVFM).

It belongs to the bHLH protein family. LHW subfamily. In terms of assembly, homodimer.

Its subcellular location is the nucleus. In terms of biological role, transcription factor that may regulate root development. In Arabidopsis thaliana (Mouse-ear cress), this protein is Transcription factor bHLH157 (BHLH157).